The following is a 138-amino-acid chain: Acidic phospholipase A2 Cvv-E6h (138 aa).

An N-terminal signal peptide occupies residues 1–16 (MRTLWIVAVLLLGVEG). Disulfide bonds link Cys-42/Cys-131, Cys-44/Cys-60, Cys-59/Cys-111, Cys-65/Cys-138, Cys-66/Cys-104, Cys-73/Cys-97, and Cys-91/Cys-102. Ca(2+)-binding residues include Tyr-43, Gly-45, and Gly-47. His-63 is an active-site residue. Asp-64 contacts Ca(2+). The active site involves Asp-105.

The protein belongs to the phospholipase A2 family. Group II subfamily. D49 sub-subfamily. Requires Ca(2+) as cofactor. In terms of tissue distribution, expressed by the venom gland.

It localises to the secreted. The catalysed reaction is a 1,2-diacyl-sn-glycero-3-phosphocholine + H2O = a 1-acyl-sn-glycero-3-phosphocholine + a fatty acid + H(+). Functionally, snake venom phospholipase A2 (PLA2) that shows very low inhibition of ADP-induced platelet aggregation in platelet-rich plasma of human, rabbit and guinea pig. In vivo, shows efficient edema-inducing activities in rat paws. PLA2 catalyzes the calcium-dependent hydrolysis of the 2-acyl groups in 3-sn-phosphoglycerides. In Crotalus viridis viridis (Prairie rattlesnake), this protein is Acidic phospholipase A2 Cvv-E6h.